The chain runs to 226 residues: MATTNNKNLTITEKVYVRVRLANEADISHIYKLFYQIHEYHNYTHLYKATESSLCDLLFKANPNPLFYGPSVLLLEVSPTPFENTKKDEKFKPVLKTFDLRATVEDKEAEEFKSKSCGDEKEDVFIAGYAFFYANYSCFYDKAGIYFESLYFRESYRKLGMGGLLFGTVASIAANNGFASVEGIVAVWNKKSYDFYVNMGVEIFDEFRYGKLVGDALQKYADKEKV.

The interval 29–45 (HIYKLFYQIHEYHNYTH) is important in binding site and for catalytic activity. An N-acetyltransferase domain is found at 72-222 (VLLLEVSPTP…VGDALQKYAD (151 aa)).

The protein belongs to the acetyltransferase family. In terms of assembly, homodimer.

It localises to the cytoplasm. The catalysed reaction is tyramine + (E)-feruloyl-CoA = N-[(E)-feruloyl]tyramine + CoA + H(+). With respect to regulation, inhibited by (2-hydroxyphenyl)amino sulfinyl acetic acid 1,1-dimethylethyl ester, by DEPC and by N-ethylmaleimide. Its function is as follows. Synthesizes amides which are involved in stress response in the cell wall. Catalyzes the synthesis of hydroxycinnamic acid amides from hydroxycinnamoyl-CoA thioesters and various hydroxyphenylethylamines such as 4-coumaroyl-CoA and sinapoyl-CoA. In Nicotiana tabacum (Common tobacco), this protein is Tyramine N-feruloyltransferase 10/30 (THT10).